The sequence spans 506 residues: Cysteine--tRNA ligase (506 aa).

Cys-43 lines the Zn(2+) pocket. A 'HIGH' region motif is present at residues 45–55 (VTVYDLCHLGH). The Zn(2+) site is built by Cys-237, His-262, and Glu-266. The 'KMSKS' region motif lies at 294-298 (KMSKS). Lys-297 serves as a coordination point for ATP.

It belongs to the class-I aminoacyl-tRNA synthetase family. In terms of assembly, monomer. Zn(2+) serves as cofactor.

The protein resides in the cytoplasm. The catalysed reaction is tRNA(Cys) + L-cysteine + ATP = L-cysteinyl-tRNA(Cys) + AMP + diphosphate. This chain is Cysteine--tRNA ligase, found in Synechococcus sp. (strain JA-3-3Ab) (Cyanobacteria bacterium Yellowstone A-Prime).